The sequence spans 258 residues: Tryptophan synthase alpha chain (258 aa).

Catalysis depends on proton acceptor residues Glu47 and Asp58.

It belongs to the TrpA family. Tetramer of two alpha and two beta chains.

It catalyses the reaction (1S,2R)-1-C-(indol-3-yl)glycerol 3-phosphate + L-serine = D-glyceraldehyde 3-phosphate + L-tryptophan + H2O. It functions in the pathway amino-acid biosynthesis; L-tryptophan biosynthesis; L-tryptophan from chorismate: step 5/5. Its function is as follows. The alpha subunit is responsible for the aldol cleavage of indoleglycerol phosphate to indole and glyceraldehyde 3-phosphate. The polypeptide is Tryptophan synthase alpha chain (Bacillus thuringiensis subsp. konkukian (strain 97-27)).